We begin with the raw amino-acid sequence, 1403 residues long: Sushi, nidogen and EGF-like domain-containing protein 1 (1403 aa).

The N-terminal stretch at 1–24 is a signal peptide; it reads MRRGAAWALLLAAALGLGARGVRA. One can recognise an NIDO domain in the interval 103 to 258; that stretch reads AFWADVDNRR…GRWAFRIDDA (156 aa). EGF-like domains are found at residues 268–309, 311–347, and 349–385; these read TTSV…RRCH, DVNE…PTCE, and AQSP…ATCE. Cystine bridges form between C272–C284, C278–C297, C299–C308, C315–C326, C320–C335, C337–C346, C353–C364, C358–C373, C375–C384, C391–C402, C396–C411, C413–C422, C433–C444, C438–C453, C455–C464, C472–C480, C474–C488, and C490–C499. N292 is a glycosylation site (N-linked (GlcNAc...) asparagine). In terms of domain architecture, EGF-like 4; calcium-binding spans 387-423; it reads DVDECSSDPCLNGGSCVDLVGNYSCICVEPFEGPQCE. Residue N408 is glycosylated (N-linked (GlcNAc...) asparagine). 2 EGF-like domains span residues 429-465 and 468-500; these read VPSP…LDCR and ILND…LLCE. N484 is a glycosylation site (N-linked (GlcNAc...) asparagine). The N-linked (GlcNAc...) asparagine glycan is linked to N536. EGF-like domains follow at residues 541–577, 580–616, 619–655, and 657–693; these read LPSP…RHCE, RPHL…RHCE, KPDS…RHCE, and APSP…HRCQ. Intrachain disulfides connect C545-C556, C550-C565, C567-C576, C584-C595, C589-C604, C606-C615, C623-C634, C628-C643, C645-C654, C661-C672, C666-C681, C683-C692, C698-C739, C724-C751, C757-C768, C762-C777, C779-C788, C795-C806, C800-C815, C817-C826, C833-C844, C838-C853, C855-C864, C871-C882, C876-C891, and C893-C902. The 58-residue stretch at 696–753 folds into the Sushi domain; the sequence is VDCGQPEEVKHATMRLNGTRMGSVALYTCDPGFSLSVLSHMRVCQPQGVWSQPPQCIE. N712 carries an N-linked (GlcNAc...) asparagine glycan. In terms of domain architecture, EGF-like 11; calcium-binding spans 753 to 789; that stretch reads EVDECQSQPCLHKGSCQDLIAGYQCLCSPGYEGVHCE. One can recognise an EGF-like 12; calcium-binding domain in the interval 791–827; sequence ETDECQAQPCRNGGSCRDLPGAFICQCPEGFVGTHCE. 2 EGF-like domains span residues 829–865 and 867–903; these read EVDA…YNCE and VSDP…KDCT. N-linked (GlcNAc...) asparagine glycosylation occurs at N886. 3 Fibronectin type-III domains span residues 908 to 1006, 1007 to 1105, and 1106 to 1200; these read PPTA…TRPR, PIED…TRPL, and PPAN…SPRD. N977, N1015, N1109, N1139, and N1298 each carry an N-linked (GlcNAc...) asparagine glycan. Positions 1295–1314 are disordered; sequence LPKNNSKDTESTPGSCSEDT. Polar residues predominate over residues 1305 to 1314; sequence STPGSCSEDT. Residues 1306-1342 form the EGF-like 15 domain; it reads TPGSCSEDTCQNGGTCVPGANAHSCDCRPGFKGRHCE. 3 cysteine pairs are disulfide-bonded: C1310-C1321, C1315-C1330, and C1332-C1341.

Phosphorylated on serine and threonine residues. Post-translationally, N-glycosylated. As to expression, expressed in liver.

The protein resides in the secreted. The protein localises to the extracellular space. It localises to the extracellular matrix. The chain is Sushi, nidogen and EGF-like domain-containing protein 1 from Rattus norvegicus (Rat).